Reading from the N-terminus, the 94-residue chain is Long neurotoxin LNTX8 (94 aa).

The N-terminal stretch at 1–21 (MKTLLLTLVVVTIMCLDLGYT) is a signal peptide. 5 cysteine pairs are disulfide-bonded: Cys24–Cys43, Cys36–Cys64, Cys49–Cys53, Cys68–Cys79, and Cys80–Cys85.

Belongs to the three-finger toxin family. Long-chain subfamily. Type II alpha-neurotoxin sub-subfamily. Expressed by the venom gland.

It localises to the secreted. In terms of biological role, binds with high affinity to muscular (alpha-1/CHRNA1) and neuronal (alpha-7/CHRNA7) nicotinic acetylcholine receptor (nAChR) and inhibits acetylcholine from binding to the receptor, thereby impairing neuromuscular and neuronal transmission. This is Long neurotoxin LNTX8 from Ophiophagus hannah (King cobra).